The following is a 457-amino-acid chain: Argininosuccinate lyase (457 aa).

It belongs to the lyase 1 family. Argininosuccinate lyase subfamily.

The protein resides in the cytoplasm. The catalysed reaction is 2-(N(omega)-L-arginino)succinate = fumarate + L-arginine. The protein operates within amino-acid biosynthesis; L-arginine biosynthesis; L-arginine from L-ornithine and carbamoyl phosphate: step 3/3. The chain is Argininosuccinate lyase from Shigella flexneri serotype 5b (strain 8401).